A 244-amino-acid chain; its full sequence is L-xylulose reductase (244 aa).

Position 1 is an N-acetylmethionine (Met-1). 11–39 contributes to the NADP(+) binding site; that stretch reads LVTGAGKGIGRSIVKALHAAGARVVAVSR. Arg-21 bears the Omega-N-methylarginine mark. Ser-46 carries the phosphoserine modification. Ser-136 provides a ligand contact to substrate. The active-site Proton acceptor is the Tyr-149. Lys-153 is a catalytic residue.

This sequence belongs to the short-chain dehydrogenases/reductases (SDR) family. In terms of assembly, homotetramer.

Its subcellular location is the membrane. The enzyme catalyses xylitol + NADP(+) = L-xylulose + NADPH + H(+). In terms of biological role, catalyzes the NADPH-dependent reduction of several pentoses, tetroses, trioses, alpha-dicarbonyl compounds and L-xylulose. Participates in the uronate cycle of glucose metabolism. May play a role in the water absorption and cellular osmoregulation in the proximal renal tubules by producing xylitol, an osmolyte, thereby preventing osmolytic stress from occurring in the renal tubules. The protein is L-xylulose reductase (DCXR) of Bos taurus (Bovine).